A 752-amino-acid polypeptide reads, in one-letter code: Photosystem I P700 chlorophyll a apoprotein A1 (752 aa).

Transmembrane regions (helical) follow at residues 73 to 96 (IFSA…FHGA), 159 to 182 (LYAT…FHYH), 198 to 222 (MNHH…HISI), 294 to 312 (TAHH…GHMY), 349 to 372 (WHAQ…HHMY), 388 to 414 (LSLF…IFMV), 436 to 458 (AIIS…LYIH), and 533 to 551 (FMVH…LILV). [4Fe-4S] cluster is bound by residues Cys-575 and Cys-584. 2 helical membrane passes run 591-612 (HVFL…HFSW) and 666-688 (LSAY…MFLF). Residue His-677 participates in chlorophyll a' binding. 2 residues coordinate chlorophyll a: Met-685 and Tyr-693. Trp-694 contributes to the phylloquinone binding site. A helical membrane pass occupies residues 726–746 (AVGVAHYLLGGIGTTWAFFLA).

Belongs to the PsaA/PsaB family. The PsaA/B heterodimer binds the P700 chlorophyll special pair and subsequent electron acceptors. PSI consists of a core antenna complex that captures photons, and an electron transfer chain that converts photonic excitation into a charge separation. The eukaryotic PSI reaction center is composed of at least 11 subunits. Requires P700 is a chlorophyll a/chlorophyll a' dimer, A0 is one or more chlorophyll a, A1 is one or both phylloquinones and FX is a shared 4Fe-4S iron-sulfur center. as cofactor.

The protein localises to the plastid. Its subcellular location is the chloroplast thylakoid membrane. The enzyme catalyses reduced [plastocyanin] + hnu + oxidized [2Fe-2S]-[ferredoxin] = oxidized [plastocyanin] + reduced [2Fe-2S]-[ferredoxin]. PsaA and PsaB bind P700, the primary electron donor of photosystem I (PSI), as well as the electron acceptors A0, A1 and FX. PSI is a plastocyanin/cytochrome c6-ferredoxin oxidoreductase, converting photonic excitation into a charge separation, which transfers an electron from the donor P700 chlorophyll pair to the spectroscopically characterized acceptors A0, A1, FX, FA and FB in turn. Oxidized P700 is reduced on the lumenal side of the thylakoid membrane by plastocyanin or cytochrome c6. The sequence is that of Photosystem I P700 chlorophyll a apoprotein A1 from Gracilaria tenuistipitata var. liui (Red alga).